A 92-amino-acid chain; its full sequence is Acylphosphatase (92 aa).

The cysteines at positions 5 and 49 are disulfide-linked. The 88-residue stretch at 5–92 (CIIAWIYGRV…SGELTDFRIR (88 aa)) folds into the Acylphosphatase-like domain. Residues Arg20 and Asn38 contribute to the active site.

Belongs to the acylphosphatase family.

The enzyme catalyses an acyl phosphate + H2O = a carboxylate + phosphate + H(+). In Shigella boydii serotype 4 (strain Sb227), this protein is Acylphosphatase.